A 1469-amino-acid polypeptide reads, in one-letter code: WASH complex subunit 2 (1469 aa).

A Phosphoserine modification is found at Ser136. 2 disordered regions span residues 178–349 (YDSK…RMPV) and 367–546 (KVQS…RVAG). Basic and acidic residues predominate over residues 197-206 (SDEKEPETKK). A Phosphoserine modification is found at Ser227. Low complexity-rich tracts occupy residues 276-293 (SPPS…TSSP) and 306-316 (STASLSSSSSS). The LFa 1 motif lies at 351 to 372 (LFNEDEFKSFMSEIVDKVQSKT). Polar residues predominate over residues 370-385 (SKTPSSSVSPATTIST). Positions 387 to 399 (EPPKTKKPVEEYP) are enriched in basic and acidic residues. Ser422 and Ser426 each carry phosphoserine. Acidic residues predominate over residues 519–528 (FDDDDLDIDD). An LFa 5 motif is present at residues 550-563 (LFEDDDQDDVTDLF). A disordered region spans residues 571–591 (IPKETSSGVSPNKNVETPVAS). Over residues 574-585 (ETSSGVSPNKNV) the composition is skewed to polar residues. The residue at position 580 (Ser580) is a Phosphoserine. Thr587 carries the phosphothreonine modification. The LFa 6 motif lies at 595–605 (LFDDIEDEDLF). Disordered stretches follow at residues 607 to 760 (TPKA…TDLF), 933 to 1254 (ALPN…KLFS), and 1316 to 1469 (VTTA…LDFK). 2 stretches are compositionally biased toward basic and acidic residues: residues 626–649 (GEDK…EKQH) and 671–687 (TEQK…KDDT). Phosphothreonine is present on Thr693. An LFa 8 motif is present at residues 698–709 (LFSEDLTDDELF). 3 stretches are compositionally biased toward polar residues: residues 709–728 (FSST…TNEF), 735–745 (YTSQTEENVSP), and 938–956 (PSAT…SVSS). Composition is skewed to basic and acidic residues over residues 971-990 (DNDH…KDEL), 1031-1042 (ETDRSEVKETPE), and 1077-1089 (RKQE…RDEP). Over residues 1091–1109 (ATVQTEAEAPSSGQNTVSS) the composition is skewed to polar residues. Residues 1118-1136 (NKSRARGPAKRRPSTRRGR) show a composition bias toward basic residues. Basic and acidic residues predominate over residues 1159–1170 (DSPEVEHSERSS). Phosphoserine is present on residues Ser1241, Ser1245, Ser1254, Ser1344, Ser1380, Ser1381, and Ser1408. 2 stretches are compositionally biased toward low complexity: residues 1417 to 1426 (FGGSSTSKAA) and 1434 to 1452 (AART…PTAT).

This sequence belongs to the FAM21 family. As to quaternary structure, component of the WASH complex.

Functionally, acts at least in part as component of the WASH complex which may regulate wash nucleation-promoting factor (NPF) activity and is required for its membrane targeting during endosomal sorting. In Drosophila melanogaster (Fruit fly), this protein is WASH complex subunit 2.